Here is a 622-residue protein sequence, read N- to C-terminus: Phosphoribomutase (622 aa).

Substrate is bound by residues Thr-57, Arg-61, 158–159 (SH), and Lys-168. Ser-158 serves as the catalytic Phosphoserine intermediate. Ser-158 serves as a coordination point for Mg(2+). Ser-158 carries the post-translational modification Phosphoserine. Positions 325, 327, and 329 each coordinate Mg(2+). Substrate-binding positions include 329 to 330 (DR), Thr-404, 428 to 430 (EEA), and Lys-442.

It belongs to the phosphohexose mutase family. The cofactor is Mg(2+).

The protein localises to the cytoplasm. Its subcellular location is the nucleus. It carries out the reaction alpha-D-ribose 1-phosphate = D-ribose 5-phosphate. Functionally, major phosphoribomutase that converts ribose 1-phosphate to ribose 5-phosphate. Involved in ribose salvage via the pentose phosphate pathway. The sequence is that of Phosphoribomutase from Saccharomyces cerevisiae (strain ATCC 204508 / S288c) (Baker's yeast).